The following is a 350-amino-acid chain: uncharacterized protein (350 aa).

Disordered regions lie at residues 1-21, 237-266, and 278-298; these read MDSFHPTPGKPTTATSNSSLN, NSDVIESSAEDSSNTDNPSTKPSNEMPISP, and EMSTPNSNHSRSRTPSSKKRT. Composition is skewed to polar residues over residues 10-21 and 246-259; these read KPTTATSNSSLN and EDSSNTDNPSTKPS. Over residues 287–298 the composition is skewed to basic residues; the sequence is SRSRTPSSKKRT.

It is found in the nucleus. This is an uncharacterized protein from Schizosaccharomyces pombe (strain 972 / ATCC 24843) (Fission yeast).